We begin with the raw amino-acid sequence, 188 residues long: UPF0301 protein PsycPRwf_0144 (188 aa).

The protein belongs to the UPF0301 (AlgH) family.

The protein is UPF0301 protein PsycPRwf_0144 of Psychrobacter sp. (strain PRwf-1).